Reading from the N-terminus, the 452-residue chain is Cholesterol 7-desaturase nvd 2 (452 aa).

2 helical membrane-spanning segments follow: residues 6 to 26 (LIRI…MGLC) and 32 to 52 (FPVM…ALVM). Residues 107–212 (WFKVADSTWI…CCEVDGMAYL (106 aa)) form the Rieske domain. Cysteine 148, histidine 150, cysteine 169, and histidine 172 together coordinate [2Fe-2S] cluster.

Belongs to the cholesterol 7-desaturase family. [2Fe-2S] cluster is required as a cofactor.

Its subcellular location is the membrane. It carries out the reaction cholesterol + NADPH + O2 + H(+) = 7-dehydrocholesterol + NADP(+) + 2 H2O. It catalyses the reaction cholesterol + NADH + O2 + H(+) = 7-dehydrocholesterol + NAD(+) + 2 H2O. The protein operates within steroid hormone biosynthesis; dafachronic acid biosynthesis. Its function is as follows. Catalyzes the production of 7-dehydrocholesterol (7-DHC or cholesta-5,7-dien-3beta-ol) by inserting a double bond (desaturating) at the C7-C8 single bond of cholesterol. Essential regulator of steroid biosynthesis as this reaction is the first step in the synthesis of the steroid hormone Delta(7)-dafachronic acid. This chain is Cholesterol 7-desaturase nvd 2, found in Ciona intestinalis (Transparent sea squirt).